We begin with the raw amino-acid sequence, 856 residues long: Increased rDNA silencing protein 4 (856 aa).

3 disordered regions span residues 1–204 (MSAS…EPKS), 230–563 (KQEE…PTPE), and 589–672 (TSLE…DEDL). Composition is skewed to low complexity over residues 12–42 (GPASPTSSSTGASTNPATSGLAAALKGATLA), 67–84 (VPTPGTGSVSTSTSRTVG), and 111–130 (SRVVTSTPSSSSSVGSAGRT). Over residues 152–162 (HVEERANDHAP) the composition is skewed to basic and acidic residues. The segment covering 194–204 (ASAKPSSEPKS) has biased composition (low complexity). Residues 239–254 (KKKKKKKPRPASKTQH) show a composition bias toward basic residues. Polar residues-rich tracts occupy residues 255–275 (HQTLTSPSPTPSEGLSIENQC) and 303–315 (SLSTVESIKSSTG). Residues 329–347 (GETRNRNGDVRDKPSREGG) are compositionally biased toward basic and acidic residues. Polar residues-rich tracts occupy residues 396–410 (PVSQHAQISETTIIS), 451–468 (RVVSPSVDQSQTIRQSAE), and 478–488 (RNSTSSDETFV). The segment covering 503–514 (KELERVRPRLDR) has biased composition (basic and acidic residues). Residues 517–535 (TSTSSRASRVSTPASVRSP) are compositionally biased toward low complexity. Residues 603 to 620 (RRGHRHHHLPHPHLRHRT) are compositionally biased toward basic residues. A compositionally biased stretch (polar residues) spans 644–654 (PSRQTEHTQPA). In terms of domain architecture, EH spans 743 to 832 (DSLGQVDLSR…EGVWESAMDR (90 aa)).

The protein belongs to the IRS4 family.

Its function is as follows. Positive regulator of phosphatidylinositol 4,5-bisphosphate turnover and negatively regulates signaling through the cell integrity pathway. Involved in rDNA silencing. This chain is Increased rDNA silencing protein 4 (irs-4), found in Neurospora crassa (strain ATCC 24698 / 74-OR23-1A / CBS 708.71 / DSM 1257 / FGSC 987).